Reading from the N-terminus, the 263-residue chain is TLC domain-containing protein 4 (263 aa).

The next 4 helical transmembrane spans lie at Leu7 to Ser27, Val53 to Asp73, Val90 to Trp110, and Ala124 to Phe144. A TLC domain is found at Lys44–Ser246. Residue Lys165 is modified to N6-acetyllysine. 2 helical membrane passes run Ile173–Leu193 and Leu211–Val231.

This sequence belongs to the TLCD4 family.

It localises to the membrane. The polypeptide is TLC domain-containing protein 4 (Homo sapiens (Human)).